Here is a 438-residue protein sequence, read N- to C-terminus: MKVTFKKDYLKDFVADSEVELLKPTAGFVRDTLLARTGVGNEMEDWLTLPSDYDKEEFARILKVADKIKSDSKVLVVIGIGGSYLGARAVIEFLKSEFHNEKANKEGLPEVYFVGTSASGRYIDDVIDLIGNRDFSINIISKSGTTTEPAIAFRTFKSLIEKKYGKEEASKRIFATTDAHKGALLNVAKENGYERFVVPDGIGGRYSVLSAVGLLPIAVAGINIQKLMDGAKAAQEEFAKDEDILNKPSILYAIYRNILYRKGFDVETIVGYEPQFRFLFEWWKQLMAESEGKDNKGIYPTSAIFSTDLHSIGQYIQDGKKILFETILDITKPISDRVVPSADDNTDNLDYILNKPMKEVNEAALTATAQAHTSAGVPNILLQLDDLDEFNLGNLIYFFEAAVAVSGYLDGINPFDQPGVEIYKTNMFKILGKPGYTD.

Catalysis depends on E289, which acts as the Proton donor. Residues H310 and K424 contribute to the active site.

The protein belongs to the GPI family.

The protein localises to the cytoplasm. It catalyses the reaction alpha-D-glucose 6-phosphate = beta-D-fructose 6-phosphate. It participates in carbohydrate biosynthesis; gluconeogenesis. Its pathway is carbohydrate degradation; glycolysis; D-glyceraldehyde 3-phosphate and glycerone phosphate from D-glucose: step 2/4. Functionally, catalyzes the reversible isomerization of glucose-6-phosphate to fructose-6-phosphate. The polypeptide is Glucose-6-phosphate isomerase (Oenococcus oeni (strain ATCC BAA-331 / PSU-1)).